We begin with the raw amino-acid sequence, 138 residues long: Large ribosomal subunit protein bL19 (138 aa).

The protein belongs to the bacterial ribosomal protein bL19 family.

This protein is located at the 30S-50S ribosomal subunit interface and may play a role in the structure and function of the aminoacyl-tRNA binding site. The sequence is that of Large ribosomal subunit protein bL19 from Rickettsia peacockii (strain Rustic).